Consider the following 518-residue polypeptide: Glutamate--cysteine ligase (518 aa).

The protein belongs to the glutamate--cysteine ligase type 1 family. Type 1 subfamily.

It catalyses the reaction L-cysteine + L-glutamate + ATP = gamma-L-glutamyl-L-cysteine + ADP + phosphate + H(+). It participates in sulfur metabolism; glutathione biosynthesis; glutathione from L-cysteine and L-glutamate: step 1/2. In Escherichia coli O7:K1 (strain IAI39 / ExPEC), this protein is Glutamate--cysteine ligase.